We begin with the raw amino-acid sequence, 497 residues long: Guanosine-5'-triphosphate,3'-diphosphate pyrophosphatase (497 aa).

Belongs to the GppA/Ppx family. GppA subfamily.

The catalysed reaction is guanosine 3'-diphosphate 5'-triphosphate + H2O = guanosine 3',5'-bis(diphosphate) + phosphate + H(+). It participates in purine metabolism; ppGpp biosynthesis; ppGpp from GTP: step 2/2. Catalyzes the conversion of pppGpp to ppGpp. Guanosine pentaphosphate (pppGpp) is a cytoplasmic signaling molecule which together with ppGpp controls the 'stringent response', an adaptive process that allows bacteria to respond to amino acid starvation, resulting in the coordinated regulation of numerous cellular activities. This chain is Guanosine-5'-triphosphate,3'-diphosphate pyrophosphatase, found in Aliivibrio fischeri (strain MJ11) (Vibrio fischeri).